The sequence spans 657 residues: Glycogen debranching enzyme (657 aa).

D336 serves as the catalytic Nucleophile. Residue E371 is the Proton donor of the active site. Residues 460–479 (ANGEENRDGTNNNHSFNHGI) form a disordered region.

Belongs to the glycosyl hydrolase 13 family.

It carries out the reaction Hydrolysis of (1-&gt;6)-alpha-D-glucosidic linkages to branches with degrees of polymerization of three or four glucose residues in limit dextrin.. It participates in glycan degradation; glycogen degradation. Removes maltotriose and maltotetraose chains that are attached by 1,6-alpha-linkage to the limit dextrin main chain, generating a debranched limit dextrin. This Enterobacter sp. (strain 638) protein is Glycogen debranching enzyme.